We begin with the raw amino-acid sequence, 69 residues long: Conotoxin LvVID (69 aa).

An N-terminal signal peptide occupies residues 1–17; it reads VLIIAVLFLTACQLTTA. A propeptide spanning residues 18–40 is cleaved from the precursor; the sequence is ETYPRGQQRHHALRSTDKNSKLT. 3 cysteine pairs are disulfide-bonded: C43/C57, C50/C61, and C56/C68.

The protein belongs to the conotoxin O1 superfamily. As to expression, expressed by the venom duct.

The protein localises to the secreted. This is Conotoxin LvVID from Conus lividus (Livid cone).